Consider the following 741-residue polypeptide: MSKRVQPAWQAPKPAERPKLRLYNSLTRQKEDFVPLDGNNVTWYSCGPTVYDASHMGHARSYISFDILRRILADYFGYNIHYVMNITDIDDKIIKRARQNHLFEEYAGESANLPLDQLLGHQKEVLVRFQETCAKNTDPDKKVMLDKTLQRMNDAVVALTTAVSQGDEKGIAEKRQHYLNEAKDPIAEWLDGKKGAEINDNAVFESLPRFWEDQFHNDMKSLNILPPDVLTRVSEYVPQIVAFIQKIIDNGLAYAANNSVYFDVNGFDRKEKHHYAKLVPEAYGDTKSLQEGEGDLSVAEDRLSEKRSANDFALWKASKAGEPWWDSPWGRGRPGWHIECSAMASDIFGSTFDIHTGGVDLKFPHHDNELAQSEAAFNESEWVKYFLHTGHLTIAGCKMSKSLKNFVTIQEALKKHSATQLRLAFLLHSWKDTLDYSENTMEMATQYEKFLNEFFLNVKDLTRHVLSEEPRRQFDAWTDVEAALQKKFSSSQVQVHAALCDNVDTRSALDAIRELVSASNVYIRDNKSRLNSLLLRNVATYITDLLHVFGAIAGPRGGIGFPVSGGAGPQAAGGDLETTVLPYVQTLAEFRNLVREQAKALKAFDILKLCDDLRDNILPNLGVRLEDKDGGKFAVKLVDRDSLLREREAKLAAEAEKAAEKERKKQAVAAAAAAKDAQRRVNPKQMFLGETEKYSAFDENGLPTLDKEGKEISKGQVKKLQKLQQQQEQRYKEYLASIKEA.

Position 46 (Cys-46) interacts with Zn(2+). The 'HIGH' region motif lies at 48-58 (PTVYDASHMGH). Phosphoserine is present on Ser-297. 3 residues coordinate Zn(2+): Cys-340, His-365, and Glu-369. The 'KMSKS' region motif lies at 398-402 (KMSKS). Residue Lys-401 participates in ATP binding.

This sequence belongs to the class-I aminoacyl-tRNA synthetase family. It depends on Zn(2+) as a cofactor.

The protein resides in the cytoplasm. It catalyses the reaction tRNA(Cys) + L-cysteine + ATP = L-cysteinyl-tRNA(Cys) + AMP + diphosphate. The chain is Cysteine--tRNA ligase, cytoplasmic (Aats-cys) from Drosophila pseudoobscura pseudoobscura (Fruit fly).